We begin with the raw amino-acid sequence, 559 residues long: uncharacterized protein (559 aa).

The segment covering 1 to 10 (MSGRRGDHPG) has biased composition (basic and acidic residues). Residues 1–76 (MSGRRGDHPG…ERSRVPPRTT (76 aa)) are disordered. The next 11 helical transmembrane spans lie at 128 to 148 (FAVD…AAAS), 155 to 175 (VALY…LIGP), 186 to 206 (VALA…IMNY), 208 to 228 (GATG…MMVF), 259 to 279 (VFGL…VEFV), 283 to 303 (LFQL…GASL), 358 to 378 (LWGN…PAFV), 387 to 407 (WVQL…NFAG), 428 to 448 (VLVT…ATAI), 490 to 510 (LAWV…WVGF), and 515 to 535 (ALLI…SLIP).

To M.leprae ML2143.

The protein resides in the cell membrane. This is an uncharacterized protein from Mycobacterium tuberculosis (strain CDC 1551 / Oshkosh).